Reading from the N-terminus, the 341-residue chain is Methionine import ATP-binding protein MetN (341 aa).

The ABC transporter domain maps to 6 to 247 (IEIKKLSKNF…PQHQATRHLL (242 aa)). ATP is bound at residue 44-51 (GMSGAGKS).

This sequence belongs to the ABC transporter superfamily. Methionine importer (TC 3.A.1.24) family. In terms of assembly, the complex is composed of two ATP-binding proteins (MetN), two transmembrane proteins (MetI) and a solute-binding protein (MetQ).

The protein resides in the cell inner membrane. It catalyses the reaction L-methionine(out) + ATP + H2O = L-methionine(in) + ADP + phosphate + H(+). The catalysed reaction is D-methionine(out) + ATP + H2O = D-methionine(in) + ADP + phosphate + H(+). Part of the ABC transporter complex MetNIQ involved in methionine import. Responsible for energy coupling to the transport system. This Protochlamydia amoebophila (strain UWE25) protein is Methionine import ATP-binding protein MetN.